Reading from the N-terminus, the 413-residue chain is 2,3-bisphosphoglycerate-independent phosphoglycerate mutase (413 aa).

This sequence belongs to the BPG-independent phosphoglycerate mutase family. A-PGAM subfamily.

The enzyme catalyses (2R)-2-phosphoglycerate = (2R)-3-phosphoglycerate. Its pathway is carbohydrate degradation; glycolysis; pyruvate from D-glyceraldehyde 3-phosphate: step 3/5. In terms of biological role, catalyzes the interconversion of 2-phosphoglycerate and 3-phosphoglycerate. This Sulfolobus acidocaldarius (strain ATCC 33909 / DSM 639 / JCM 8929 / NBRC 15157 / NCIMB 11770) protein is 2,3-bisphosphoglycerate-independent phosphoglycerate mutase.